Consider the following 137-residue polypeptide: Large ribosomal subunit protein uL16 (137 aa).

Basic residues predominate over residues 1-17; it reads MLQPKRTKFRKQMKGRN. Residues 1-22 are disordered; it reads MLQPKRTKFRKQMKGRNRGLAQ.

Belongs to the universal ribosomal protein uL16 family. As to quaternary structure, part of the 50S ribosomal subunit.

Binds 23S rRNA and is also seen to make contacts with the A and possibly P site tRNAs. In Teredinibacter turnerae (strain ATCC 39867 / T7901), this protein is Large ribosomal subunit protein uL16.